The chain runs to 215 residues: Nascent polypeptide-associated complex subunit alpha (215 aa).

Positions 1–81 (MPGEATETVP…SEKKARKAMS (81 aa)) are disordered. Residues 9–28 (VPATEQELPQPQAETGSGTE) are compositionally biased toward polar residues. Positions 29–42 (SDSDESVPELEEQD) are enriched in acidic residues. Serine 43 is subject to Phosphoserine; by ILK1. The span at 44–57 (TQATTQQAQLAAAA) shows a compositional bias: low complexity. Residues 69–80 (QSRSEKKARKAM) form a required for DNA-binding region. The 66-residue stretch at 70–135 (SRSEKKARKA…AKIEDLSQQA (66 aa)) folds into the NAC-A/B domain. Positions 93–108 (RVTIRKSKNILFVITK) are RNA/DNA-binding. Residue serine 132 is modified to Phosphoserine. Lysine 142 is modified (N6-acetyllysine; alternate). Lysine 142 participates in a covalent cross-link: Glycyl lysine isopeptide (Lys-Gly) (interchain with G-Cter in SUMO2); alternate. Threonine 159 carries the post-translational modification Phosphothreonine; by GSK3-beta. A Phosphothreonine modification is found at threonine 161. Serine 166, serine 186, serine 191, and serine 203 each carry phosphoserine. The region spanning 176–213 (VEVKDIELVMSQANVSRAKAVRALKNNSNDIVNAIMEL) is the UBA domain.

The protein belongs to the NAC-alpha family. Part of the nascent polypeptide-associated complex (NAC), which is a heterodimer of NACA and BTF3 (via NAC-A/B domains). NAC associates with ribosomes through the BTF3/NACB subunit and contacts the ribosomal protein L23, which is positioned near the exiting site. Both subunits can contact nascent polypeptide chains. NACA may also form homodimers, and only this form binds DNA. Interacts with TBP and JUN. Post-translationally, phosphorylation of Ser-43 by ILK during cell adhesion may promote nuclear localization. Phosphorylation of Thr-159 by GSK3B may promote proteasome mediated degradation.

It localises to the cytoplasm. It is found in the nucleus. Prevents inappropriate targeting of non-secretory polypeptides to the endoplasmic reticulum (ER). Binds to nascent polypeptide chains as they emerge from the ribosome and blocks their interaction with the signal recognition particle (SRP), which normally targets nascent secretory peptides to the ER. Also reduces the inherent affinity of ribosomes for protein translocation sites in the ER membrane (M sites). May act as a specific coactivator for JUN, binding to DNA and stabilizing the interaction of JUN homodimers with target gene promoters. The protein is Nascent polypeptide-associated complex subunit alpha (NACA) of Pongo abelii (Sumatran orangutan).